The chain runs to 101 residues: Movement protein (101 aa).

Residues 30–50 (EVAVLSFVALICIYLLYLWVL) form a helical membrane-spanning segment. The segment at 78–101 (RSPIPNTLEPTAPVHPGPFVPGSG) is disordered. Residues 90–101 (PVHPGPFVPGSG) are compositionally biased toward pro residues.

Belongs to the mastrevirus movement protein family. Interacts with the capsid protein (CP). Part of a MP-CP-viral DNA complex.

The protein localises to the host membrane. In terms of biological role, involved in the viral transport within, and between cells. This chain is Movement protein, found in Maize streak virus genotype E (isolate Pat) (MSV).